The primary structure comprises 61 residues: Small ribosomal subunit protein uS14 (61 aa).

Zn(2+) is bound by residues C24, C27, C40, and C43.

The protein belongs to the universal ribosomal protein uS14 family. Zinc-binding uS14 subfamily. Part of the 30S ribosomal subunit. Contacts proteins S3 and S10. The cofactor is Zn(2+).

Binds 16S rRNA, required for the assembly of 30S particles and may also be responsible for determining the conformation of the 16S rRNA at the A site. This is Small ribosomal subunit protein uS14 from Thermotoga neapolitana (strain ATCC 49049 / DSM 4359 / NBRC 107923 / NS-E).